A 665-amino-acid polypeptide reads, in one-letter code: non-specific serine/threonine protein kinase (665 aa).

A Protein kinase domain is found at 145–597 (FDVHCRIGSG…AEEALKHPFF (453 aa)). Residues 151-159 (IGSGTFSTV) and Lys-181 contribute to the ATP site. The active-site Proton acceptor is the Asp-268.

Belongs to the protein kinase superfamily. Ser/Thr protein kinase family. Interacts with chif (via N-terminus).

The catalysed reaction is L-seryl-[protein] + ATP = O-phospho-L-seryl-[protein] + ADP + H(+). It carries out the reaction L-threonyl-[protein] + ATP = O-phospho-L-threonyl-[protein] + ADP + H(+). Functionally, probable serine/threonine protein kinase that forms a complex with the N-terminal peptide of the chiffon protein and may be involved in regulating meiotic processes in the male testis. The protein is non-specific serine/threonine protein kinase of Drosophila melanogaster (Fruit fly).